The following is a 252-amino-acid chain: Ubiquinone/menaquinone biosynthesis C-methyltransferase UbiE (252 aa).

Residues T75, D96, and 123–124 (NA) each bind S-adenosyl-L-methionine.

This sequence belongs to the class I-like SAM-binding methyltransferase superfamily. MenG/UbiE family.

The catalysed reaction is a 2-demethylmenaquinol + S-adenosyl-L-methionine = a menaquinol + S-adenosyl-L-homocysteine + H(+). It carries out the reaction a 2-methoxy-6-(all-trans-polyprenyl)benzene-1,4-diol + S-adenosyl-L-methionine = a 5-methoxy-2-methyl-3-(all-trans-polyprenyl)benzene-1,4-diol + S-adenosyl-L-homocysteine + H(+). Its pathway is quinol/quinone metabolism; menaquinone biosynthesis; menaquinol from 1,4-dihydroxy-2-naphthoate: step 2/2. The protein operates within cofactor biosynthesis; ubiquinone biosynthesis. Methyltransferase required for the conversion of demethylmenaquinol (DMKH2) to menaquinol (MKH2) and the conversion of 2-polyprenyl-6-methoxy-1,4-benzoquinol (DDMQH2) to 2-polyprenyl-3-methyl-6-methoxy-1,4-benzoquinol (DMQH2). In Methylobacterium nodulans (strain LMG 21967 / CNCM I-2342 / ORS 2060), this protein is Ubiquinone/menaquinone biosynthesis C-methyltransferase UbiE.